The sequence spans 152 residues: MKEVTIYTDGACSGNPGPGGWGAVLIYGDKRKELSGAEPSTTNQRMEITAAIAALRVLKEPCRVHLYSDSAYLVNAFRQGWLARWERNGWLTVKKQPVENQDLWRELLQVASRHQVEWLKVKGHSDNPENNRCDELARAAIAALRRQEIPSS.

The region spanning 1–142 (MKEVTIYTDG…CDELARAAIA (142 aa)) is the RNase H type-1 domain. Residues D9, E47, D69, and D134 each contribute to the Mg(2+) site.

The protein belongs to the RNase H family. In terms of assembly, monomer. The cofactor is Mg(2+).

The protein localises to the cytoplasm. The enzyme catalyses Endonucleolytic cleavage to 5'-phosphomonoester.. Its function is as follows. Endonuclease that specifically degrades the RNA of RNA-DNA hybrids. The chain is Ribonuclease H from Moorella thermoacetica (strain ATCC 39073 / JCM 9320).